A 393-amino-acid polypeptide reads, in one-letter code: Interleukin-1 receptor type 2 (393 aa).

A signal peptide spans 1 to 13; sequence MFRLYVLVMGVSA. The Extracellular segment spans residues 14–347; the sequence is FTLQPAAHTG…RTTVKEPPPT (334 aa). Intrachain disulfides connect cysteine 28/cysteine 116, cysteine 50/cysteine 108, and cysteine 152/cysteine 207. 3 consecutive Ig-like C2-type domains span residues 29–120, 134–221, and 237–342; these read PVRG…DKVS, PFIS…YNIT, and PVII…TTVK. N-linked (GlcNAc...) asparagine glycosylation is found at asparagine 66, asparagine 72, and asparagine 112. Residues asparagine 219 and asparagine 277 are each glycosylated (N-linked (GlcNAc...) asparagine). Cysteine 258 and cysteine 326 are oxidised to a cystine. Residues 348 to 368 form a helical membrane-spanning segment; that stretch reads FSWGIVLAPLALAFLVLGGIW. At 369–393 the chain is on the cytoplasmic side; the sequence is MHRRCKHRTGKADGLTVLRPHHQDF.

This sequence belongs to the interleukin-1 receptor family. As to quaternary structure, forms a non-signaling receptor complex consisting of IL1R2 and IL1RAP. A soluble form (sIL1R2) can also be produced by proteolytic cleavage at the cell surface (shedding) involving a metalloproteinase.

Its subcellular location is the secreted. It is found in the cell membrane. Its function is as follows. Non-signaling receptor for IL1A, IL1B and IL1RN. Reduces IL1B activities. Serves as a decoy receptor by competitive binding to IL1B and preventing its binding to IL1R1. Also modulates cellular response through non-signaling association with IL1RAP after binding to IL1B. IL1R2 (membrane and secreted forms) preferentially binds IL1B and poorly IL1A and IL1RN. The secreted IL1R2 recruits secreted IL1RAP with high affinity; this complex formation may be the dominant mechanism for neutralization of IL1B by secreted/soluble receptors. In Chlorocebus aethiops (Green monkey), this protein is Interleukin-1 receptor type 2 (IL1R2).